A 1978-amino-acid polypeptide reads, in one-letter code: Sodium channel protein type 8 subunit alpha (1978 aa).

Disordered stretches follow at residues 1-20 and 28-62; these read MAAR…FTPE and RIAE…LEAG. Residues 1-132 lie on the Cytoplasmic side of the membrane; sequence MAARVLAPPG…RIAIKILIHS (132 aa). Over residues 28–61 the composition is skewed to basic and acidic residues; the sequence is RIAESKLKKPPKADGSHREDDEDSKPKPNSDLEA. The I repeat unit spans residues 114 to 442; the sequence is ILSPFNLIRR…KAMLEQLKKQ (329 aa). The helical transmembrane segment at 133-151 threads the bilayer; sequence VFSMIIMCTILTNCVFMTF. The Extracellular segment spans residues 152–158; sequence SNPPEWS. The chain crosses the membrane as a helical span at residues 159–179; it reads KNVEYTFTGIYTFESLVKIIA. The Cytoplasmic segment spans residues 180–193; the sequence is RGFCIDGFTFLRDP. Residues 194 to 211 traverse the membrane as a helical segment; it reads WNWLDFSVIMMAYVTEFV. The Extracellular portion of the chain corresponds to 212–217; the sequence is DLGNVS. Asn215 carries an N-linked (GlcNAc...) asparagine glycan. The chain crosses the membrane as a helical span at residues 218–234; the sequence is ALRTFRVLRALKTISVI. Topologically, residues 235-253 are cytoplasmic; sequence PGLKTIVGALIQSVKKLSD. Residues 254-273 traverse the membrane as a helical segment; sequence VMILTVFCLSVFALIGLQLF. Topologically, residues 274–355 are extracellular; the sequence is MGNLRNKCVV…PNYGYTSFDT (82 aa). Residues Cys281 and Cys333 are joined by a disulfide bond. N-linked (GlcNAc...) asparagine glycosylation is found at Asn289, Asn295, Asn308, and Asn326. The segment at residues 356 to 380 is an intramembrane region (pore-forming); it reads FSWAFLALFRLMTQDYWENLYQLTL. Residue Glu373 coordinates Na(+). The Extracellular segment spans residues 381-387; sequence RAAGKTY. Residues 388 to 408 traverse the membrane as a helical segment; it reads MIFFVLVIFVGSFYLVNLILA. The Cytoplasmic segment spans residues 409-751; that stretch reads VVAMAYEEQN…EIVNLIVMDP (343 aa). Disordered stretches follow at residues 446-530 and 576-597; these read AQAA…KAFR and DPGS…SEGR. Residues 473-486 show a composition bias toward low complexity; the sequence is SPRSSSELSKLSSK. Residues 489 to 500 are compositionally biased toward basic residues; it reads KERRNRRKKRKQ. 2 stretches are compositionally biased toward basic and acidic residues: residues 501–530 and 586–597; these read KELS…KAFR and DEHSTVEESEGR. Phosphoserine is present on residues Ser518 and Ser520. One copy of the II repeat lies at 733 to 1005; the sequence is CHPYWIKLKE…QISVIRIKKG (273 aa). Residues 752-770 form a helical membrane-spanning segment; sequence FVDLAITICIVLNTLFMAM. Over 771 to 781 the chain is Extracellular; that stretch reads EHHPMTPQFEH. The chain crosses the membrane as a helical span at residues 782–801; it reads VLAVGNLVFTGIFTAEMFLK. Residues 802–815 lie on the Cytoplasmic side of the membrane; sequence LIAMDPYYYFQEGW. The chain crosses the membrane as a helical span at residues 816-835; sequence NIFDGFIVSLSLMELGLADV. At 836–837 the chain is on the extracellular side; the sequence is EG. The chain crosses the membrane as a helical span at residues 838–855; it reads LSVLRSFRLLRVFKLAKS. Topologically, residues 856-871 are cytoplasmic; that stretch reads WPTLNMLIKIIGNSVG. The chain crosses the membrane as a helical span at residues 872 to 890; sequence ALGNLTLVLAIIVFIFAVV. Topologically, residues 891–919 are extracellular; it reads GMQLFGKSYKECVCKISQECKLPRWHMND. An intrachain disulfide couples Cys904 to Cys910. Residues 920 to 940 constitute an intramembrane region (pore-forming); the sequence is FFHSFLIVFRVLCGEWIETMW. Na(+)-binding residues include Glu934 and Glu937. Topologically, residues 941-953 are extracellular; that stretch reads DCMEVAGQAMCLI. A disulfide bond links Cys942 and Cys951. A helical membrane pass occupies residues 954–974; the sequence is VFMMVMVIGNLVVLNLFLALL. Residues 975–1197 lie on the Cytoplasmic side of the membrane; it reads LSSFSADNLA…TCFLIVEHNW (223 aa). A disordered region spans residues 1105 to 1146; sequence NLNTEDVSSESDPEGSKDKLDDTSSSEGSTIDIKPEVEEVPV. One copy of the III repeat lies at 1178 to 1493; the sequence is LGKSWWILRK…KKYYNAMKKL (316 aa). Residues 1198 to 1215 form a helical membrane-spanning segment; that stretch reads FETFIIFMILLSSGALAF. Topologically, residues 1216–1228 are extracellular; it reads EDIYIEQRKTIRT. Residues 1229-1247 form a helical membrane-spanning segment; it reads ILEYADKVFTYIFILEMLL. Residues 1248-1261 lie on the Cytoplasmic side of the membrane; the sequence is KWTAYGFVKFFTNA. The helical transmembrane segment at 1262–1280 threads the bilayer; it reads WCWLDFLIVAVSLVSLIAN. The Extracellular portion of the chain corresponds to 1281-1288; the sequence is ALGYSELG. Residues 1289–1307 form a helical membrane-spanning segment; that stretch reads AIKSLRTLRALRPLRALSR. Residues 1308–1324 are Cytoplasmic-facing; the sequence is FEGMRVVVNALVGAIPS. Residues 1325-1344 traverse the membrane as a helical segment; it reads IMNVLLVCLIFWLIFSIMGV. The Extracellular segment spans residues 1345-1397; it reads NLFAGKYHYCFNETSEIRFEIDEVNNKTDCEKLMEGNNTEIRWKNVKINFDNV. Cysteines 1354 and 1374 form a disulfide. N-linked (GlcNAc...) asparagine glycans are attached at residues Asn1356, Asn1370, and Asn1381. Residues 1398–1419 constitute an intramembrane region (pore-forming); the sequence is GAGYLALLQVATFKGWMDIMYA. Topologically, residues 1420-1436 are extracellular; sequence AVDSRKPDEQPDYEGNI. Residues 1437–1458 form a helical membrane-spanning segment; that stretch reads YMYIYFVIFIIFGSFFTLNLFI. Residues 1459–1521 lie on the Cytoplasmic side of the membrane; the sequence is GVIIDNFNQQ…IVFDFVTQQA (63 aa). The residue at position 1495 (Ser1495) is a Phosphoserine; by PKC. One copy of the IV repeat lies at 1502–1799; the sequence is IPRPLNKIQG…WEKFDPDATQ (298 aa). A helical transmembrane segment spans residues 1522–1539; sequence FDIVIMMLICLNMVTMMV. Residues 1540–1550 are Extracellular-facing; sequence ETDTQSKQMEN. The helical transmembrane segment at 1551 to 1569 threads the bilayer; the sequence is ILYWINLVFVIFFTCECVL. Residues 1570 to 1581 are Cytoplasmic-facing; the sequence is KMFALRHYYFTI. Residues 1582–1599 form a helical membrane-spanning segment; that stretch reads GWNIFDFVVVILSIVGMF. At 1600-1612 the chain is on the extracellular side; that stretch reads LADIIEKYFVSPT. The helical transmembrane segment at 1613–1629 threads the bilayer; that stretch reads LFRVIRLARIGRILRLI. Residues 1630–1648 lie on the Cytoplasmic side of the membrane; sequence KGAKGIRTLLFALMMSLPA. The helical transmembrane segment at 1649–1666 threads the bilayer; sequence LFNIGLLLFLVMFIFSIF. Topologically, residues 1667 to 1688 are extracellular; sequence GMSNFAYVKHEAGIDDMFNFET. The segment at residues 1689 to 1711 is an intramembrane region (pore-forming); the sequence is FGNSMICLFQITTSAGWDGLLLP. At 1712–1740 the chain is on the extracellular side; it reads ILNRPPDCSLDKEHPGSGFKGDCGNPSVG. Cys1719 and Cys1734 are disulfide-bonded. Residues 1741–1763 form a helical membrane-spanning segment; sequence IFFFVSYIIISFLIVVNMYIAII. The Cytoplasmic portion of the chain corresponds to 1764 to 1978; sequence LENFSVATEE…RQKEVRESKC (215 aa). The IQ domain occupies 1893–1922; the sequence is EEVSAVVLQRAYRGHLARRGFICRKITSNK. Residues 1924–1978 are disordered; it reads ENGGTHREKKESTPSTASLPSYDSVTKPDKEKQQRAEEGRRERAKRQKEVRESKC. The segment covering 1936–1947 has biased composition (polar residues); the sequence is TPSTASLPSYDS. The span at 1949–1978 shows a compositional bias: basic and acidic residues; it reads TKPDKEKQQRAEEGRRERAKRQKEVRESKC.

It belongs to the sodium channel (TC 1.A.1.10) family. Nav1.6/SCN8A subfamily. The voltage-sensitive sodium channel consists of an ion-conducting pore-forming alpha subunit regulated by one or more beta-1 (SCN1B), beta-2 (SCN2B), beta-3 (SCN3B) and/or beta-4 (SCN4B) subunits. Beta-1 (SCN1B) and beta-3 (SCN3B) are non-covalently associated with alpha, while beta-2 (SCN2B) and beta-4 (SCN4B) are covalently linked by disulfide bonds. Interacts with FGF13. Interacts with NEDD4 and NEDD4L. Interacts with FGF14, GBG3, GBB2 and SCN1B. Interacts with TMEM233. Interacts with the conotoxin GVIIJ. Interacts with the scorpion toxin BMK M1. Interacts with CALM1; the interaction modulates the inactivation rate of SCN8A. In terms of processing, may be ubiquitinated by NEDD4L; which would promote its endocytosis. Post-translationally, phosphorylation at Ser-1495 by PKC in a highly conserved cytoplasmic loop slows inactivation of the sodium channel and reduces peak sodium currents. In terms of tissue distribution, expressed in the hippocampus (at protein level). Expressed in brain, cerebellum and spinal cord. Expressed in non-neuronal tissues, such as monocytes/macrophages.

Its subcellular location is the cell membrane. It is found in the cell projection. The protein localises to the axon. The protein resides in the cytoplasmic vesicle. It localises to the podosome. The catalysed reaction is Na(+)(in) = Na(+)(out). Pore-forming subunit of a voltage-gated sodium channel complex assuming opened or closed conformations in response to the voltage difference across membranes and through which sodium ions selectively pass along their electrochemical gradient. Contributes to neuronal excitability by regulating action potential threshold and propagation. In terms of biological role, more specifically expressed in non-neuronal cells, could play a role in sodium release from intracellular compartments and participate in the control of podosomes formation and macrophages adhesion and movement. The protein is Sodium channel protein type 8 subunit alpha of Mus musculus (Mouse).